The chain runs to 367 residues: MKTSHLIRIALPGALAAALLASQVSQAADLVPPPGYYAAVGERKGNAGSCPAVPPPYTGSLVFTSKYEGSDSARATLNVKAEKTFRSQIKDITDMERGATKLVTQYMRSGRDGDLACALNWMSTWARAGALQSDDFNHTGKSMRKWALGSLSGAYMRLKFSSSRPLAAHAEQSREIEDWFARLGTQVVRDWSGLPLKKINNHSYWAAWSVMSTAVVTNRRDLFDWAVSEFKVAANQVDEQGFLPNELKRRQRALAYHNYALPPLAMIAAFAQVNGVDLRQENHGALQRLAERVMKGVDDEETFEEKTGEDQDMTDLKVDNKYAWLEPYCALYRCEPKMLEAKKDREPFNSFRLGGEVTRVFSREGGS.

The signal sequence occupies residues 1 to 27 (MKTSHLIRIALPGALAAALLASQVSQA). Substrate-binding positions include 65–66 (SK), 138–139 (HT), and Y256.

This sequence belongs to the polysaccharide lyase 5 family.

It localises to the periplasm. It catalyses the reaction Eliminative cleavage of alginate to give oligosaccharides with 4-deoxy-alpha-L-erythro-hex-4-enuronosyl groups at their non-reducing ends and beta-D-mannuronate at their reducing end.. Its function is as follows. Catalyzes the depolymerization of alginate by cleaving the beta-1,4 glycosidic bond between two adjacent sugar residues via a beta-elimination mechanism. May serve to degrade mislocalized alginate that is trapped in the periplasmic space. The protein is Alginate lyase of Pseudomonas aeruginosa (strain LESB58).